A 305-amino-acid chain; its full sequence is Acetyl-coenzyme A carboxylase carboxyl transferase subunit beta (305 aa).

Positions 25–294 constitute a CoA carboxyltransferase N-terminal domain; the sequence is VWTKCDSCGQ…PGNDDVEIRS (270 aa). The Zn(2+) site is built by Cys29, Cys32, Cys48, and Cys51. A C4-type zinc finger spans residues 29–51; the sequence is CDSCGQVLYRAELERNLGVCPKC. The tract at residues 281–305 is disordered; sequence NHPEPGNDDVEIRSDAPSESSQDDA.

The protein belongs to the AccD/PCCB family. In terms of assembly, acetyl-CoA carboxylase is a heterohexamer composed of biotin carboxyl carrier protein (AccB), biotin carboxylase (AccC) and two subunits each of ACCase subunit alpha (AccA) and ACCase subunit beta (AccD). Zn(2+) is required as a cofactor.

It localises to the cytoplasm. It catalyses the reaction N(6)-carboxybiotinyl-L-lysyl-[protein] + acetyl-CoA = N(6)-biotinyl-L-lysyl-[protein] + malonyl-CoA. It participates in lipid metabolism; malonyl-CoA biosynthesis; malonyl-CoA from acetyl-CoA: step 1/1. Component of the acetyl coenzyme A carboxylase (ACC) complex. Biotin carboxylase (BC) catalyzes the carboxylation of biotin on its carrier protein (BCCP) and then the CO(2) group is transferred by the transcarboxylase to acetyl-CoA to form malonyl-CoA. This Pectobacterium atrosepticum (strain SCRI 1043 / ATCC BAA-672) (Erwinia carotovora subsp. atroseptica) protein is Acetyl-coenzyme A carboxylase carboxyl transferase subunit beta.